The primary structure comprises 142 residues: Transcriptional regulator MraZ (142 aa).

SpoVT-AbrB domains lie at 5 to 51 and 77 to 120; these read ASAL…PRPE and AMDV…DSQT.

It belongs to the MraZ family. Forms oligomers.

The protein resides in the cytoplasm. It localises to the nucleoid. The chain is Transcriptional regulator MraZ from Burkholderia ambifaria (strain MC40-6).